Consider the following 510-residue polypeptide: 2,3-bisphosphoglycerate-independent phosphoglycerate mutase (510 aa).

Mn(2+)-binding residues include aspartate 16 and serine 66. The active-site Phosphoserine intermediate is serine 66. Substrate is bound by residues histidine 127, 156–157, arginine 186, arginine 192, 257–260, and lysine 333; these read RD and RADR. The Mn(2+) site is built by aspartate 400, histidine 404, aspartate 441, histidine 442, and histidine 460.

It belongs to the BPG-independent phosphoglycerate mutase family. Monomer. Mn(2+) is required as a cofactor.

The enzyme catalyses (2R)-2-phosphoglycerate = (2R)-3-phosphoglycerate. The protein operates within carbohydrate degradation; glycolysis; pyruvate from D-glyceraldehyde 3-phosphate: step 3/5. Catalyzes the interconversion of 2-phosphoglycerate and 3-phosphoglycerate. This chain is 2,3-bisphosphoglycerate-independent phosphoglycerate mutase, found in Gluconobacter oxydans (strain 621H) (Gluconobacter suboxydans).